A 246-amino-acid polypeptide reads, in one-letter code: UDP-N-acetyl-D-mannosaminuronic acid transferase (246 aa).

It belongs to the glycosyltransferase 26 family.

It catalyses the reaction UDP-N-acetyl-alpha-D-mannosaminouronate + N-acetyl-alpha-D-glucosaminyl-di-trans,octa-cis-undecaprenyl diphosphate = beta-D-ManNAcA-(1-&gt;4)-alpha-D-GlcNAc-di-trans,octa-cis-undecaprenyl diphosphate + UDP + H(+). It functions in the pathway bacterial outer membrane biogenesis; enterobacterial common antigen biosynthesis. Catalyzes the synthesis of Und-PP-GlcNAc-ManNAcA (Lipid II), the second lipid-linked intermediate involved in enterobacterial common antigen (ECA) synthesis. The sequence is that of UDP-N-acetyl-D-mannosaminuronic acid transferase from Escherichia coli (strain ATCC 8739 / DSM 1576 / NBRC 3972 / NCIMB 8545 / WDCM 00012 / Crooks).